We begin with the raw amino-acid sequence, 407 residues long: Arginine deiminase (407 aa).

C397 acts as the Amidino-cysteine intermediate in catalysis.

Belongs to the arginine deiminase family.

It localises to the cytoplasm. It carries out the reaction L-arginine + H2O = L-citrulline + NH4(+). The protein operates within amino-acid degradation; L-arginine degradation via ADI pathway; carbamoyl phosphate from L-arginine: step 1/2. This chain is Arginine deiminase, found in Salmonella choleraesuis (strain SC-B67).